A 402-amino-acid polypeptide reads, in one-letter code: Metacaspase-1 (402 aa).

Residues 1-79 (MAYPGQGGHH…FAPPSGPIGP (79 aa)) form a disordered region. A compositionally biased stretch (low complexity) spans 23 to 45 (PAPHGYAQPGYGYAPPSGPPQGY). Catalysis depends on residues histidine 193 and cysteine 249.

The protein belongs to the peptidase C14B family.

Functionally, involved in cell death (apoptosis). The protein is Metacaspase-1 (MCA1) of Mycosarcoma maydis (Corn smut fungus).